The sequence spans 104 residues: Large ribosomal subunit protein eL31 (104 aa).

It belongs to the eukaryotic ribosomal protein eL31 family.

In Aeropyrum pernix (strain ATCC 700893 / DSM 11879 / JCM 9820 / NBRC 100138 / K1), this protein is Large ribosomal subunit protein eL31 (rpl31e).